The primary structure comprises 123 residues: Small ribosomal subunit protein uS13 (123 aa).

The disordered stretch occupies residues 92 to 123; that stretch reads RKGLPVRGQKTKTNARTRKGPKKLVGAKKKSK.

It belongs to the universal ribosomal protein uS13 family. Part of the 30S ribosomal subunit. Forms a loose heterodimer with protein S19. Forms two bridges to the 50S subunit in the 70S ribosome.

Located at the top of the head of the 30S subunit, it contacts several helices of the 16S rRNA. In the 70S ribosome it contacts the 23S rRNA (bridge B1a) and protein L5 of the 50S subunit (bridge B1b), connecting the 2 subunits; these bridges are implicated in subunit movement. Contacts the tRNAs in the A and P-sites. This chain is Small ribosomal subunit protein uS13, found in Clostridium kluyveri (strain NBRC 12016).